The primary structure comprises 264 residues: Phosphonoacetaldehyde hydrolase (264 aa).

The Nucleophile role is filled by Asp9. Mg(2+) is bound by residues Asp9 and Ala11. Lys50 serves as the catalytic Schiff-base intermediate with substrate. Residue Asp183 coordinates Mg(2+).

This sequence belongs to the HAD-like hydrolase superfamily. PhnX family. As to quaternary structure, homodimer. It depends on Mg(2+) as a cofactor.

The enzyme catalyses phosphonoacetaldehyde + H2O = acetaldehyde + phosphate + H(+). Functionally, involved in phosphonate degradation. The protein is Phosphonoacetaldehyde hydrolase of Bacillus cereus (strain ATCC 14579 / DSM 31 / CCUG 7414 / JCM 2152 / NBRC 15305 / NCIMB 9373 / NCTC 2599 / NRRL B-3711).